The sequence spans 99 residues: Aspartyl/glutamyl-tRNA(Asn/Gln) amidotransferase subunit C (99 aa).

It belongs to the GatC family. In terms of assembly, heterotrimer of A, B and C subunits.

It carries out the reaction L-glutamyl-tRNA(Gln) + L-glutamine + ATP + H2O = L-glutaminyl-tRNA(Gln) + L-glutamate + ADP + phosphate + H(+). The enzyme catalyses L-aspartyl-tRNA(Asn) + L-glutamine + ATP + H2O = L-asparaginyl-tRNA(Asn) + L-glutamate + ADP + phosphate + 2 H(+). Functionally, allows the formation of correctly charged Asn-tRNA(Asn) or Gln-tRNA(Gln) through the transamidation of misacylated Asp-tRNA(Asn) or Glu-tRNA(Gln) in organisms which lack either or both of asparaginyl-tRNA or glutaminyl-tRNA synthetases. The reaction takes place in the presence of glutamine and ATP through an activated phospho-Asp-tRNA(Asn) or phospho-Glu-tRNA(Gln). This chain is Aspartyl/glutamyl-tRNA(Asn/Gln) amidotransferase subunit C, found in Rhodococcus erythropolis (strain PR4 / NBRC 100887).